Reading from the N-terminus, the 194-residue chain is Phosphoheptose isomerase (194 aa).

Residues 37–194 (ISNSFKQGGK…LIEFEMAKQA (158 aa)) form the SIS domain. 52-54 (NGG) is a substrate binding site. His-61 and Glu-65 together coordinate Zn(2+). Residues Glu-65, 93 to 94 (ND), 119 to 121 (STS), Ser-124, and Gln-172 each bind substrate. Zn(2+)-binding residues include Gln-172 and His-180.

Belongs to the SIS family. GmhA subfamily. In terms of assembly, homotetramer. Zn(2+) is required as a cofactor.

The protein resides in the cytoplasm. It catalyses the reaction 2 D-sedoheptulose 7-phosphate = D-glycero-alpha-D-manno-heptose 7-phosphate + D-glycero-beta-D-manno-heptose 7-phosphate. It functions in the pathway carbohydrate biosynthesis; D-glycero-D-manno-heptose 7-phosphate biosynthesis; D-glycero-alpha-D-manno-heptose 7-phosphate and D-glycero-beta-D-manno-heptose 7-phosphate from sedoheptulose 7-phosphate: step 1/1. Functionally, catalyzes the isomerization of sedoheptulose 7-phosphate in D-glycero-D-manno-heptose 7-phosphate. This chain is Phosphoheptose isomerase, found in Haemophilus influenzae (strain PittGG).